The following is a 158-amino-acid chain: 6,7-dimethyl-8-ribityllumazine synthase (158 aa).

5-amino-6-(D-ribitylamino)uracil is bound by residues Phe-22, 57–59 (AYE), and 81–83 (AVI). 86 to 87 (GT) is a (2S)-2-hydroxy-3-oxobutyl phosphate binding site. His-89 acts as the Proton donor in catalysis. 5-amino-6-(D-ribitylamino)uracil is bound at residue Phe-114. Arg-128 is a binding site for (2S)-2-hydroxy-3-oxobutyl phosphate.

The protein belongs to the DMRL synthase family. As to quaternary structure, forms an icosahedral capsid composed of 60 subunits, arranged as a dodecamer of pentamers.

It carries out the reaction (2S)-2-hydroxy-3-oxobutyl phosphate + 5-amino-6-(D-ribitylamino)uracil = 6,7-dimethyl-8-(1-D-ribityl)lumazine + phosphate + 2 H2O + H(+). It participates in cofactor biosynthesis; riboflavin biosynthesis; riboflavin from 2-hydroxy-3-oxobutyl phosphate and 5-amino-6-(D-ribitylamino)uracil: step 1/2. Catalyzes the formation of 6,7-dimethyl-8-ribityllumazine by condensation of 5-amino-6-(D-ribitylamino)uracil with 3,4-dihydroxy-2-butanone 4-phosphate. This is the penultimate step in the biosynthesis of riboflavin. The protein is 6,7-dimethyl-8-ribityllumazine synthase of Pseudoalteromonas atlantica (strain T6c / ATCC BAA-1087).